The primary structure comprises 205 residues: Ephrin-A1 (205 aa).

Positions 1-18 are cleaved as a signal peptide; that stretch reads MEFLWAPLLGLCCSLAAA. The Ephrin RBD domain maps to 19–151; it reads DRHTVFWNSS…RLKVTVSGKI (133 aa). The N-linked (GlcNAc...) asparagine glycan is linked to Asn-26. Cystine bridges form between Cys-51/Cys-92 and Cys-80/Cys-140. Residue Ser-182 is the site of GPI-anchor amidated serine attachment. The propeptide at 183 to 205 is removed in mature form; it reads AAPRLFPLAWTVLLLPLLLLQTP.

Belongs to the ephrin family. In terms of assembly, monomer. Homodimer. Forms heterodimers with EPHA2. Binds to the receptor tyrosine kinases EPHA2, EPHA3, EPHA4, EPHA5, EPHA6 and EPHA7. Also binds with low affinity to EPHA1. Undergoes proteolysis by a metalloprotease to give rise to a soluble monomeric form. In terms of processing, N-Glycosylation is required for binding to EPHA2 receptor and inducing its internalization. As to expression, brain. Down-regulated in primary glioma tissues compared to the normal tissues. The soluble monomeric form is expressed in the glioblastoma multiforme (GBM) and breast cancer cells (at protein level).

It localises to the cell membrane. It is found in the secreted. In terms of biological role, cell surface GPI-bound ligand for Eph receptors, a family of receptor tyrosine kinases which are crucial for migration, repulsion and adhesion during neuronal, vascular and epithelial development. Binds promiscuously Eph receptors residing on adjacent cells, leading to contact-dependent bidirectional signaling into neighboring cells. Plays an important role in angiogenesis and tumor neovascularization. The recruitment of VAV2, VAV3 and PI3-kinase p85 subunit by phosphorylated EPHA2 is critical for EFNA1-induced RAC1 GTPase activation and vascular endothelial cell migration and assembly. Exerts anti-oncogenic effects in tumor cells through activation and down-regulation of EPHA2. Activates EPHA2 by inducing tyrosine phosphorylation which leads to its internalization and degradation. Acts as a negative regulator in the tumorigenesis of gliomas by down-regulating EPHA2 and FAK. Can evoke collapse of embryonic neuronal growth cone and regulates dendritic spine morphogenesis. The polypeptide is Ephrin-A1 (EFNA1) (Homo sapiens (Human)).